A 79-amino-acid polypeptide reads, in one-letter code: Protein Vpu (79 aa).

The Extracellular segment spans residues 1–7 (MLLLIKL). The chain crosses the membrane as a helical span at residues 8-28 (GFIGLAIETLIVIVVWAIVYR). The Cytoplasmic segment spans residues 29 to 79 (IYREVKVEEKISQLRQRIRDRAEDSGNESDGDAEELANLLPPDRIDQDNWV). The tract at residues 48-79 (DRAEDSGNESDGDAEELANLLPPDRIDQDNWV) is disordered. Phosphoserine; by host CK2 is present on residues S53 and S57. Residues 53 to 63 (SGNESDGDAEE) are compositionally biased toward acidic residues.

The protein belongs to the HIV-1 VPU protein family. As to quaternary structure, homopentamer. Interacts with host CD4 and BRTC; these interactions induce proteasomal degradation of CD4. Interacts with host BST2; this interaction leads to the degradation of host BST2. Interacts with host FBXW11. Interacts with host AP1M1; this interaction plays a role in the mistrafficking and subsequent degradation of host BST2. Interacts with host RANBP2; this interaction allows Vpu to down-regulate host BLM sumoylation. In terms of processing, phosphorylated by host CK2. This phosphorylation is necessary for interaction with human BTRC and degradation of CD4.

It is found in the host membrane. Its activity is regulated as follows. Ion channel activity is inhibited by hexamethylene amiloride in vitro. Its function is as follows. Enhances virion budding by targeting host CD4 and Tetherin/BST2 to proteasome degradation. Degradation of CD4 prevents any unwanted premature interactions between viral Env and its host receptor CD4 in the endoplasmic reticulum. Degradation of antiretroviral protein Tetherin/BST2 is important for virion budding, as BST2 tethers new viral particles to the host cell membrane. Mechanistically, Vpu bridges either CD4 or BST2 to BTRC, a substrate recognition subunit of the Skp1/Cullin/F-box protein E3 ubiquitin ligase, induces their ubiquitination and subsequent proteasomal degradation. The alteration of the E3 ligase specificity by Vpu seems to promote the degradation of host IKBKB, leading to NF-kappa-B down-regulation and subsequent apoptosis. Acts as a viroporin that forms an oligomeric ion channel in membranes. Modulates the host DNA repair mechanisms to promote degradation of nuclear viral cDNA in cells that are already productively infected in order to suppress immune sensing and proviral hyper-integration (superinfection). Manipulates PML-NBs and modulates SUMOylation of host BLM protein thereby enhancing its DNA-end processing activity toward viral unintegrated linear DNA. Also inhibits RAD52-mediated homologous repair of viral cDNA, preventing the generation of dead-end circular forms of single copies of the long terminal repeat and permitting sustained nucleolytic attack. The sequence is that of Protein Vpu from Pan troglodytes (Chimpanzee).